Here is a 391-residue protein sequence, read N- to C-terminus: ATP phosphoribosyltransferase regulatory subunit (391 aa).

Belongs to the class-II aminoacyl-tRNA synthetase family. HisZ subfamily. As to quaternary structure, heteromultimer composed of HisG and HisZ subunits.

It localises to the cytoplasm. It participates in amino-acid biosynthesis; L-histidine biosynthesis; L-histidine from 5-phospho-alpha-D-ribose 1-diphosphate: step 1/9. Functionally, required for the first step of histidine biosynthesis. May allow the feedback regulation of ATP phosphoribosyltransferase activity by histidine. The polypeptide is ATP phosphoribosyltransferase regulatory subunit (Prochlorococcus marinus (strain NATL2A)).